The primary structure comprises 1010 residues: Peroxisome proliferator-activated receptor gamma coactivator 1-beta (1010 aa).

The segment at 1-91 (MAGNDCGALL…FFQIDSENEA (91 aa)) is abolishes DNA transcriptional activity when missing. Positions 115–134 (GLDEGDTPSCTPASPAPLSV) are disordered. Residues 140 to 144 (LERLL) carry the LXXLL motif 1 motif. Serine 145 and serine 148 each carry phosphoserine. The short motif at 156 to 160 (LQKLL) is the LXXLL motif 2 element. 3 disordered regions span residues 165–214 (SPTA…RPCT), 227–282 (PRGK…QVPK), and 306–329 (PQRA…PRSR). Polar residues-rich tracts occupy residues 178–189 (TWSQTSLSSRSQ) and 264–279 (PQDS…NSAQ). The LXXLL motif 3 motif lies at 342–346 (LRELL). Positions 369–384 (TPQSRTRPPKDSQASP) are enriched in polar residues. 3 disordered regions span residues 369 to 475 (TPQS…VCPV), 517 to 567 (GLTD…CLML), and 590 to 674 (GTAG…QKRP). Serine 383 bears the Phosphoserine mark. A compositionally biased stretch (basic and acidic residues) spans 411-428 (LRLEVKRDVNKPARQKRE). Acidic residues predominate over residues 429–449 (EDEEEEEEEEEEEEKEDEEEE). Positions 521-532 (SSQGQQLPLGSQ) are enriched in low complexity. Basic and acidic residues predominate over residues 604–618 (PMEEDPFKQDTKHSP). Composition is skewed to polar residues over residues 619-638 (GQDT…TATP) and 659-670 (QHATTQPVSQAG). Position 628 is a phosphoserine (serine 628). The HCFC1-binding-motif (HBM) motif lies at 681 to 684 (DHDY). Disordered regions lie at residues 714–744 (HQGA…SMQL) and 778–881 (DTVF…KKRR). Residues 782 to 794 (EDSSSSSGESSFL) show a composition bias toward low complexity. The span at 795-811 (LEEEEEEGGEEDDEGED) shows a compositional bias: acidic residues. The span at 832–852 (SRQLCSRSRSSSGSSSCSSWS) shows a compositional bias: low complexity. The RRM domain maps to 889–963 (RVVYIRNLSG…RNEPSFHLSY (75 aa)).

Interacts with estrogen receptor alpha/ESR1. Interacts with Sterol regulatory binding transcription factor 1/SREBF1, PPAR-alpha/PPARA, thyroid hormone receptor beta/THRB and host cell factor/HCFC1. Interacts with Estrogen-related receptor gamma/ESRRG and alpha/ESRRA. Interacts with PRDM16. As to expression, ubiquitous with higher expression in heart, brown adipose tissue.

The protein localises to the nucleus. Plays a role of stimulator of transcription factors and nuclear receptors activities. Activates transcriptional activity of estrogen receptor alpha, nuclear respiratory factor 1 (NRF1) and glucocorticoid receptor in the presence of glucocorticoids. May play a role in constitutive non-adrenergic-mediated mitochondrial biogenesis as suggested by increased basal oxygen consumption and mitochondrial number when overexpressed. May be part of the pathways regulating the elevation of gluconeogenesis, beta-oxidation of fatty acids and ketogenesis during fasting. Stimulates SREBP-mediated lipogenic gene expression in the liver. Induces energy expenditure and antagonizes obesity when overexpressed. Also induces the expression of mitochondrial genes involved in oxidative metabolism. Induces the expression of PERM1 in the skeletal muscle in an ESRRA-dependent manner. This chain is Peroxisome proliferator-activated receptor gamma coactivator 1-beta (Ppargc1b), found in Rattus norvegicus (Rat).